Reading from the N-terminus, the 345-residue chain is Gibberellin receptor GID1A (345 aa).

At A2 the chain carries N-acetylalanine. Residues 113–115 carry the Involved in the stabilization of the negatively charged intermediate by the formation of the oxyanion hole motif; that stretch reads HGG. Gibberellin A4 contacts are provided by residues 115–116, Y127, and S191; that span reads GS. 4 residues coordinate gibberellin A3: S116, Y127, S191, and F238. Residue S191 is part of the active site. D289 is an active-site residue. G320 serves as a coordination point for gibberellin A4. Residue G320 participates in gibberellin A3 binding.

It belongs to the 'GDXG' lipolytic enzyme family. Interacts (via N-terminus) with the DELLA proteins GAI, RGA, RGL1, RGL2 and RGL3 (via N-terminus) in a GA-dependent manner. In terms of tissue distribution, widely expressed.

It is found in the nucleus. Functions as a soluble gibberellin (GA) receptor. GA is an essential hormone that regulates growth and development in plants. Binds with high affinity the biologically active gibberellin GA4, but has no affinity for the biologically inactive GAs. In response to GA, interacts with specific DELLA proteins, known as repressors of GA-induced growth, and targets them for degradation via proteasome. Seems to be required for GA signaling that controls root growth, seed germination, stem elongation and flower development. Partially redundant with GID1B and GID1C. The chain is Gibberellin receptor GID1A (GID1A) from Arabidopsis thaliana (Mouse-ear cress).